The following is a 710-amino-acid chain: Nucleolin (710 aa).

The interval 1 to 303 is disordered; sequence MVKLAKAGKN…KKQKVEGTEP (303 aa). Lysine 9, lysine 15, and lysine 16 each carry N6-acetyllysine. Over residues 24–43 the composition is skewed to acidic residues; it reads VEEDSEDEEMSEDEEDDSSG. Residues serine 28, serine 34, serine 41, and serine 42 each carry the phosphoserine modification. Over residues 56–107 the composition is skewed to low complexity; sequence AAATSAKKVVVSPTKKVAVATPAKKAAVTPGKKAAATPAKKTVTPAKAVTTP. Residues 58–65 form repeat 1; it reads ATSAKKVV. The 8 X 8 AA tandem repeats of X-T-P-X-K-K-X-X stretch occupies residues 58-135; the sequence is ATSAKKVVVS…GAAIPAKGAK (78 aa). Residue serine 67 is modified to Phosphoserine. Threonine 69, threonine 76, threonine 84, and threonine 92 each carry phosphothreonine. Repeat copies occupy residues 75 to 82, 83 to 90, and 91 to 98. Residue lysine 96 is modified to N6-acetyllysine. Threonine 99 is modified (phosphothreonine). One copy of the 5; truncated repeat lies at 99–104; the sequence is TPAKAV. Lysine 102 carries the N6-acetyllysine modification. Residues 105 to 112 form repeat 6; sequence TTPGKKGA. Threonine 106 bears the Phosphothreonine mark. The residue at position 109 (lysine 109) is an N6-acetyllysine. At threonine 113 the chain carries Phosphothreonine. Position 116 is an N6-acetyllysine (lysine 116). Tandem repeats lie at residues 120-127 and 128-135. At threonine 121 the chain carries Phosphothreonine. A compositionally biased stretch (low complexity) spans 122–137; the sequence is PGKKGAAIPAKGAKNG. An N6-acetyllysine modification is found at lysine 124. A phosphoserine mark is found at serine 145 and serine 153. A compositionally biased stretch (acidic residues) spans 145 to 171; that stretch reads SDEEEDDDSEEDEEDDEDEDEDEDEIE. Residues 172–183 show a composition bias toward low complexity; the sequence is PAAMKAAAAAPA. 2 positions are modified to phosphoserine: serine 184 and serine 206. A compositionally biased stretch (acidic residues) spans 184–211; that stretch reads SEDEDDEDDEDDEDDDDDEEDDSEEEAM. Threonine 214 bears the Phosphothreonine mark. A compositionally biased stretch (acidic residues) spans 234 to 272; sequence EDEDEEEDDEDEDDDDDEDDEDDDDEDDEEEEEEEEEEP. The span at 273-300 shows a compositional bias: basic and acidic residues; it reads VKEAPGKRKKEMAKQKAAPEAKKQKVEG. Residue lysine 297 forms a Glycyl lysine isopeptide (Lys-Gly) (interchain with G-Cter in SUMO1); alternate linkage. Residue lysine 297 forms a Glycyl lysine isopeptide (Lys-Gly) (interchain with G-Cter in SUMO2); alternate linkage. At threonine 301 the chain carries Phosphothreonine. 2 consecutive RRM domains span residues 307–383 and 393–466; these read FNLF…KPKG and RTLL…YTGE. Position 318 is an N6-acetyllysine (lysine 318). A Glycyl lysine isopeptide (Lys-Gly) (interchain with G-Cter in SUMO1); alternate cross-link involves residue lysine 324. A Glycyl lysine isopeptide (Lys-Gly) (interchain with G-Cter in SUMO2); alternate cross-link involves residue lysine 324. Lysine 348 carries the N6-acetyllysine modification. A Phosphoserine modification is found at serine 356. Threonine 367 carries the post-translational modification Phosphothreonine. Lysine 370 is covalently cross-linked (Glycyl lysine isopeptide (Lys-Gly) (interchain with G-Cter in SUMO2)). Lysine 377 is covalently cross-linked (Glycyl lysine isopeptide (Lys-Gly) (interchain with G-Cter in SUMO2); alternate). Lysine 377 is modified (N6-acetyllysine; alternate). Lysine 398 and lysine 403 each carry N6-acetyllysine. Residue threonine 405 is modified to Phosphothreonine. 2 positions are modified to N6-acetyllysine: lysine 427 and lysine 444. Residues serine 458 and serine 460 each carry the phosphoserine modification. N6-acetyllysine occurs at positions 467 and 477. An RRM 3 domain is found at 486-560; sequence KTLVLSNLSY…RAIRLELQGP (75 aa). Lysine 513 is covalently cross-linked (Glycyl lysine isopeptide (Lys-Gly) (interchain with G-Cter in SUMO2); alternate). Lysine 513 carries the N6-acetyllysine; alternate modification. Lysine 521 is subject to N6-acetyllysine. Serine 563 is modified (phosphoserine). Residue lysine 572 is modified to N6-acetyllysine. The region spanning 572-647 is the RRM 4 domain; it reads KTLFVKGLSE…NKVTLDWAKP (76 aa). Lysine 577 participates in a covalent cross-link: Glycyl lysine isopeptide (Lys-Gly) (interchain with G-Cter in SUMO2); alternate. At lysine 577 the chain carries N6-acetyllysine; alternate. Position 580 is a phosphoserine (serine 580). Lysine 589 is covalently cross-linked (Glycyl lysine isopeptide (Lys-Gly) (interchain with G-Cter in SUMO1); alternate). A Glycyl lysine isopeptide (Lys-Gly) (interchain with G-Cter in SUMO2); alternate cross-link involves residue lysine 589. Phosphoserine is present on residues serine 591 and serine 619. Lysine 624 participates in a covalent cross-link: Glycyl lysine isopeptide (Lys-Gly) (interchain with G-Cter in SUMO2). Residues 640 to 710 are disordered; sequence VTLDWAKPKG…KPQGKKTKFE (71 aa). Lysine 646 carries the N6-acetyllysine modification. Positions 650-696 are enriched in gly residues; the sequence is EGGFGGRGGGRGGFGGRGGGRGGRGGFGGRGRGGFGGRGGFRGGRGG. Asymmetric dimethylarginine is present on residues arginine 656, arginine 660, arginine 666, arginine 670, arginine 673, arginine 679, arginine 681, arginine 687, and arginine 691. Arginine 694 carries the asymmetric dimethylarginine; alternate modification. Arginine 694 carries the omega-N-methylarginine; alternate modification. Residues 697–710 are compositionally biased toward basic and acidic residues; sequence GGDHKPQGKKTKFE.

In terms of assembly, identified in a IGF2BP1-dependent mRNP granule complex containing untranslated mRNAs. Component of the SWAP complex that consists of NPM1, NCL/nucleolin, PARP1 and SWAP70. Component of a complex which is at least composed of HTATSF1/Tat-SF1, the P-TEFb complex components CDK9 and CCNT1, RNA polymerase II, SUPT5H, and NCL/nucleolin. Interacts with AICDA. Interacts with APTX. Interacts with C1QBP. Interacts with ERBB4. Interacts (via C-terminus) with FMR1 isoform 6 (via N-terminus). Interacts with GZF1; this interaction is important for nucleolar localization of GZF1. Interacts with NSUN2. Interacts with NVL. Interacts (via N-terminus domain) with SETX. Interacts (via RRM1 and C-terminal RRM4/Arg/Gly-rich domains) with TERT; the interaction is important for nucleolar localization of TERT. Interacts with WDR46. Interacts with ZFP36. Interacts with LRRC34. Interacts with RRP1B. Interacts with HNRNPU; this interaction occurs during mitosis. Interacts with RIOK1; RIOK1 recruits NCL to PRMT5 for symmetrically methylation. Interacts with ZBTB7B. Interacts with MDK; this interaction promotes NCL clustering and lateral movements of this complex into lipid rafts leading to MDK internalization. Interacts with HDGF (isoform 1). Interacts with ALKBH2. Interacts with IGFBP5; this interaction is necessary for IGFBP5 localization to the nucleus. Interacts with DDX24 (when ubiquitinated); this interaction may be important during ribosome biogenesis. Post-translationally, some glutamate residues are glycylated by TTLL8. This modification occurs exclusively on glutamate residues and results in a glycine chain on the gamma-carboxyl group. Symmetrically methylated by PRMT5.

It is found in the nucleus. It localises to the nucleolus. Its subcellular location is the cytoplasm. In terms of biological role, nucleolin is the major nucleolar protein of growing eukaryotic cells. It is found associated with intranucleolar chromatin and pre-ribosomal particles. It induces chromatin decondensation by binding to histone H1. It is thought to play a role in pre-rRNA transcription and ribosome assembly. May play a role in the process of transcriptional elongation. Binds RNA oligonucleotides with 5'-UUAGGG-3' repeats more tightly than the telomeric single-stranded DNA 5'-TTAGGG-3' repeats. The protein is Nucleolin (NCL) of Homo sapiens (Human).